Consider the following 264-residue polypeptide: Acyl-[acyl-carrier-protein]--UDP-N-acetylglucosamine O-acyltransferase (264 aa).

It belongs to the transferase hexapeptide repeat family. LpxA subfamily. In terms of assembly, homotrimer.

The protein resides in the cytoplasm. It carries out the reaction a (3R)-hydroxyacyl-[ACP] + UDP-N-acetyl-alpha-D-glucosamine = a UDP-3-O-[(3R)-3-hydroxyacyl]-N-acetyl-alpha-D-glucosamine + holo-[ACP]. The protein operates within glycolipid biosynthesis; lipid IV(A) biosynthesis; lipid IV(A) from (3R)-3-hydroxytetradecanoyl-[acyl-carrier-protein] and UDP-N-acetyl-alpha-D-glucosamine: step 1/6. Its function is as follows. Involved in the biosynthesis of lipid A, a phosphorylated glycolipid that anchors the lipopolysaccharide to the outer membrane of the cell. This is Acyl-[acyl-carrier-protein]--UDP-N-acetylglucosamine O-acyltransferase from Albidiferax ferrireducens (strain ATCC BAA-621 / DSM 15236 / T118) (Rhodoferax ferrireducens).